A 539-amino-acid polypeptide reads, in one-letter code: Carotene epsilon-monooxygenase, chloroplastic (539 aa).

The transit peptide at 1 to 36 (MESSLFSPSSSSYSSLFTAKPTRLLSPKPKFTFSIR) directs the protein to the chloroplast. Residue Cys487 participates in heme binding.

This sequence belongs to the cytochrome P450 family. The cofactor is heme.

Its subcellular location is the plastid. It is found in the chloroplast. It carries out the reaction alpha-carotene + reduced [NADPH--hemoprotein reductase] + O2 = alpha-cryptoxanthin + oxidized [NADPH--hemoprotein reductase] + H2O + H(+). The catalysed reaction is zeinoxanthin + reduced [NADPH--hemoprotein reductase] + O2 = lutein + oxidized [NADPH--hemoprotein reductase] + H2O + H(+). Functionally, heme-containing cytochrome P450 involved in the biosynthesis of xanthophylls. Specific for epsilon- and beta-ring hydroxylation of alpha-carotene. Has only a low activity toward the beta-rings of beta-carotene. The preferred substrate in planta is not alpha-carotene but the epsilon-ring of zeinoxanthin. Possesses a major beta-carotene hydroxylase activity in planta when depleted in its preferred substrate alpha-carotene. The protein is Carotene epsilon-monooxygenase, chloroplastic (CYP97C1) of Arabidopsis thaliana (Mouse-ear cress).